The sequence spans 186 residues: uncharacterized protein (186 aa).

4 helical membrane-spanning segments follow: residues 5–25 (LIAC…FEDI), 39–59 (IITI…KLFA), 62–82 (NLLF…ILLF), and 122–142 (GFFE…IALM).

It localises to the cell membrane. This is an uncharacterized protein from Borreliella burgdorferi (strain ATCC 35210 / DSM 4680 / CIP 102532 / B31) (Borrelia burgdorferi).